The chain runs to 196 residues: ATP-dependent Clp protease proteolytic subunit (196 aa).

The active-site Nucleophile is Ser-98. The active site involves His-123.

This sequence belongs to the peptidase S14 family. As to quaternary structure, fourteen ClpP subunits assemble into 2 heptameric rings which stack back to back to give a disk-like structure with a central cavity, resembling the structure of eukaryotic proteasomes.

Its subcellular location is the cytoplasm. The enzyme catalyses Hydrolysis of proteins to small peptides in the presence of ATP and magnesium. alpha-casein is the usual test substrate. In the absence of ATP, only oligopeptides shorter than five residues are hydrolyzed (such as succinyl-Leu-Tyr-|-NHMec, and Leu-Tyr-Leu-|-Tyr-Trp, in which cleavage of the -Tyr-|-Leu- and -Tyr-|-Trp bonds also occurs).. Its function is as follows. Cleaves peptides in various proteins in a process that requires ATP hydrolysis. Has a chymotrypsin-like activity. Plays a major role in the degradation of misfolded proteins. This chain is ATP-dependent Clp protease proteolytic subunit, found in Anoxybacillus flavithermus (strain DSM 21510 / WK1).